Consider the following 322-residue polypeptide: Phosphatidylserine decarboxylase proenzyme (322 aa).

Catalysis depends on charge relay system; for autoendoproteolytic cleavage activity residues Asp90, His147, and Ser254. Ser254 acts as the Schiff-base intermediate with substrate; via pyruvic acid; for decarboxylase activity in catalysis. Residue Ser254 is modified to Pyruvic acid (Ser); by autocatalysis. Residues 294–322 (EVEPAPLPADEIKAEHDASPLVDNKKDDT) form a disordered region. Residues 303–322 (DEIKAEHDASPLVDNKKDDT) are compositionally biased toward basic and acidic residues.

Belongs to the phosphatidylserine decarboxylase family. PSD-B subfamily. Prokaryotic type I sub-subfamily. Heterodimer of a large membrane-associated beta subunit and a small pyruvoyl-containing alpha subunit. The cofactor is pyruvate. Post-translationally, is synthesized initially as an inactive proenzyme. Formation of the active enzyme involves a self-maturation process in which the active site pyruvoyl group is generated from an internal serine residue via an autocatalytic post-translational modification. Two non-identical subunits are generated from the proenzyme in this reaction, and the pyruvate is formed at the N-terminus of the alpha chain, which is derived from the carboxyl end of the proenzyme. The autoendoproteolytic cleavage occurs by a canonical serine protease mechanism, in which the side chain hydroxyl group of the serine supplies its oxygen atom to form the C-terminus of the beta chain, while the remainder of the serine residue undergoes an oxidative deamination to produce ammonia and the pyruvoyl prosthetic group on the alpha chain. During this reaction, the Ser that is part of the protease active site of the proenzyme becomes the pyruvoyl prosthetic group, which constitutes an essential element of the active site of the mature decarboxylase.

The protein resides in the cell membrane. It carries out the reaction a 1,2-diacyl-sn-glycero-3-phospho-L-serine + H(+) = a 1,2-diacyl-sn-glycero-3-phosphoethanolamine + CO2. It participates in phospholipid metabolism; phosphatidylethanolamine biosynthesis; phosphatidylethanolamine from CDP-diacylglycerol: step 2/2. In terms of biological role, catalyzes the formation of phosphatidylethanolamine (PtdEtn) from phosphatidylserine (PtdSer). The sequence is that of Phosphatidylserine decarboxylase proenzyme from Salmonella paratyphi C (strain RKS4594).